A 211-amino-acid polypeptide reads, in one-letter code: ATP phosphoribosyltransferase (211 aa).

It belongs to the ATP phosphoribosyltransferase family. Short subfamily. Heteromultimer composed of HisG and HisZ subunits.

Its subcellular location is the cytoplasm. It carries out the reaction 1-(5-phospho-beta-D-ribosyl)-ATP + diphosphate = 5-phospho-alpha-D-ribose 1-diphosphate + ATP. It functions in the pathway amino-acid biosynthesis; L-histidine biosynthesis; L-histidine from 5-phospho-alpha-D-ribose 1-diphosphate: step 1/9. Catalyzes the condensation of ATP and 5-phosphoribose 1-diphosphate to form N'-(5'-phosphoribosyl)-ATP (PR-ATP). Has a crucial role in the pathway because the rate of histidine biosynthesis seems to be controlled primarily by regulation of HisG enzymatic activity. This Bacillus mycoides (strain KBAB4) (Bacillus weihenstephanensis) protein is ATP phosphoribosyltransferase.